The following is a 370-amino-acid chain: Putrescine-binding periplasmic protein PotF (370 aa).

Positions 1–26 (MTALNKKWLSGLVAGALMAVSVGTLA) are cleaved as a signal peptide. S38 is a binding site for putrescine. C175 and C239 are joined by a disulfide. Putrescine-binding residues include D247 and D278.

It belongs to the bacterial solute-binding protein PotD/PotF family. As to quaternary structure, the complex is composed of two ATP-binding proteins (PotG), two transmembrane proteins (PotH and PotI) and a solute-binding protein (PotF).

It is found in the periplasm. Its activity is regulated as follows. Transport is feedback inhibited by intracellular polyamines. In terms of biological role, part of the ABC transporter complex PotFGHI involved in putrescine uptake. Binds putrescine. Imports putrescine for maintenance of the optimal concentration of polyamines necessary for cell growth in the presence of glucose. The sequence is that of Putrescine-binding periplasmic protein PotF from Escherichia coli (strain K12).